A 283-amino-acid polypeptide reads, in one-letter code: Bifunctional protein FolD (283 aa).

Residues 163 to 165 (GRS), serine 188, and isoleucine 229 each bind NADP(+).

It belongs to the tetrahydrofolate dehydrogenase/cyclohydrolase family. Homodimer.

The enzyme catalyses (6R)-5,10-methylene-5,6,7,8-tetrahydrofolate + NADP(+) = (6R)-5,10-methenyltetrahydrofolate + NADPH. It carries out the reaction (6R)-5,10-methenyltetrahydrofolate + H2O = (6R)-10-formyltetrahydrofolate + H(+). The protein operates within one-carbon metabolism; tetrahydrofolate interconversion. Catalyzes the oxidation of 5,10-methylenetetrahydrofolate to 5,10-methenyltetrahydrofolate and then the hydrolysis of 5,10-methenyltetrahydrofolate to 10-formyltetrahydrofolate. In Latilactobacillus sakei subsp. sakei (strain 23K) (Lactobacillus sakei subsp. sakei), this protein is Bifunctional protein FolD.